Reading from the N-terminus, the 1338-residue chain is Serine/threonine-protein kinase cek1 (1338 aa).

The 71-residue stretch at 28–98 (SKDENLQPSI…RAVNCLLKDD (71 aa)) folds into the PAS domain. A disordered region spans residues 484–554 (PDFAIGSPMS…GRSSLFSRGR (71 aa)). A compositionally biased stretch (polar residues) spans 491–501 (PMSQDSSNYSS). A Phosphoserine modification is found at S525. Residues 541-550 (PASNGRSSLF) are compositionally biased toward polar residues. Positions 589-958 (YKILKPISKG…VEEIKAHPFF (370 aa)) constitute a Protein kinase domain. ATP-binding positions include 595–603 (ISKGAFGSV) and K618. D713 functions as the Proton acceptor in the catalytic mechanism. S748 is modified (phosphoserine). Polar residues predominate over residues 813-842 (ENSAEDSPTATNTPTSQVDESNIFRSTDSP). Disordered regions lie at residues 813–844 (ENSA…SPRV), 1010–1035 (KLEE…LRSN), and 1159–1185 (SSTM…TSSD). The region spanning 959–1057 (KSVNWDTILE…RNLDFLNKAN (99 aa)) is the AGC-kinase C-terminal domain. Residues 1159 to 1174 (SSTMSASQSQSSMHTA) are compositionally biased toward low complexity. S1211 bears the Phosphoserine mark.

It belongs to the protein kinase superfamily. Ser/Thr protein kinase family.

The enzyme catalyses L-seryl-[protein] + ATP = O-phospho-L-seryl-[protein] + ADP + H(+). The catalysed reaction is L-threonyl-[protein] + ATP = O-phospho-L-threonyl-[protein] + ADP + H(+). Functionally, may facilitate the progression of anaphase through direct or indirect interaction with the cut8 protein. This chain is Serine/threonine-protein kinase cek1 (cek1), found in Schizosaccharomyces pombe (strain 972 / ATCC 24843) (Fission yeast).